A 160-amino-acid polypeptide reads, in one-letter code: Suppressyn (160 aa).

An N-terminal signal peptide occupies residues 1 to 39 (MACIYPTTFYTSLPTKSLNMGISLTTILILSVAVLLSTA). Positions 137–160 (AKASKPTTPPENRPRHFHSFIQKL) are disordered.

Interacts (secreted) with SLC1A5; mainly at cell surface. Specifically expressed in placenta by extravillous trophoblasts and syncytiotrophoblasts (at protein level).

It is found in the secreted. May play a role in trophoblasts syncytialization, the spontaneous fusion of their plasma membranes, an essential process in placental development. May negatively regulate cell-cell fusion by interacting with SLC1A5, the probable receptor on the cell surface of the fusogenic syncytin-1/ERVW-1. The sequence is that of Suppressyn (ERVH48-1) from Homo sapiens (Human).